The following is a 485-amino-acid chain: Glycogen synthase (485 aa).

Lysine 17 provides a ligand contact to ADP-alpha-D-glucose.

Belongs to the glycosyltransferase 1 family. Bacterial/plant glycogen synthase subfamily.

The catalysed reaction is [(1-&gt;4)-alpha-D-glucosyl](n) + ADP-alpha-D-glucose = [(1-&gt;4)-alpha-D-glucosyl](n+1) + ADP + H(+). It participates in glycan biosynthesis; glycogen biosynthesis. Synthesizes alpha-1,4-glucan chains using ADP-glucose. In Novosphingobium aromaticivorans (strain ATCC 700278 / DSM 12444 / CCUG 56034 / CIP 105152 / NBRC 16084 / F199), this protein is Glycogen synthase.